We begin with the raw amino-acid sequence, 313 residues long: Ribosomal RNA small subunit methyltransferase H (313 aa).

Residues 35-37, Asp-55, Phe-81, Asp-103, and Gln-110 each bind S-adenosyl-L-methionine; that span reads GGH.

Belongs to the methyltransferase superfamily. RsmH family.

It is found in the cytoplasm. It catalyses the reaction cytidine(1402) in 16S rRNA + S-adenosyl-L-methionine = N(4)-methylcytidine(1402) in 16S rRNA + S-adenosyl-L-homocysteine + H(+). In terms of biological role, specifically methylates the N4 position of cytidine in position 1402 (C1402) of 16S rRNA. The chain is Ribosomal RNA small subunit methyltransferase H from Pseudomonas syringae pv. tomato (strain ATCC BAA-871 / DC3000).